Consider the following 148-residue polypeptide: MRTVLNILNFVLGGFATTLGWLLATLVSIVLIFTLPLTRSCWEITKLSLVPYGNEAIHVDELNPAGKNVLLNTGGTVLNIFWLIFFGWWLCLMHIATGIAQCISIIGIPVGIANFKIAAIALWPVGRRVVSVETAQAAREANARRRFE.

The Periplasmic segment spans residues Met1–Gly14. The helical transmembrane segment at Phe15–Leu37 threads the bilayer. Topologically, residues Thr38–Thr76 are cytoplasmic. The helical transmembrane segment at Val77–Ile99 threads the bilayer. Topologically, residues Ala100–Cys102 are periplasmic. Residues Ile103–Val125 form a helical membrane-spanning segment. The Cytoplasmic portion of the chain corresponds to Gly126 to Glu148.

It is found in the cell inner membrane. The sequence is that of Inner membrane protein YccF (yccF) from Escherichia coli (strain K12).